The following is a 102-amino-acid chain: Small ribosomal subunit protein uS10 (102 aa).

It belongs to the universal ribosomal protein uS10 family. As to quaternary structure, part of the 30S ribosomal subunit.

Its function is as follows. Involved in the binding of tRNA to the ribosomes. The protein is Small ribosomal subunit protein uS10 of Staphylococcus haemolyticus (strain JCSC1435).